We begin with the raw amino-acid sequence, 570 residues long: MDSVSNLKSTNFQNNNDPKESVEEAVLRYVGVDLKNHIKKTKKKLKKQKKRKHGSKMSHEDEDTDMDWYLKTSGSKDLRKVDDIEPNSVAVAAVAAAYNSSMREKDKRSCHKKSSNSRSERKKHRKRKSSKERKAKIKMVLDPQLTTLDDGITTTAFLPDDLIAETAFDKYVDTEKAYLAKHPSKSLEVNEDDKENNFNNNSSTLVRIYTDLEGIPNDGSYIKRTPKIPEKDVKSDDLILAPEENNGDTALLRSDIVKASVIDGAITKSIGKKFTPSEENALDQFIEEYMKIRGLDRRQMCERIWSTDGVIRDGFWANISKVLPYRTRSSIYKHIRRKYHIFEQRGKWTPEEDQELARLCLEKEGHWTEVGKLLGRMPEDCRDRWRNYMKCGSKRGSKRWSKEEEELLTTVVNEMIEEAHQYQRMKALEAANKNDRYNQMYSRGPKGKRISDNPTFKDMINWTVVSERMSGTRSRIQCRYKWNKLVTDEAARSMLSIPVSERKWLLERLKQLPKTSYSNIDWNSIATYKPGYPRTGLELRLCYEQMREKIHDFKGRSTAEIIDSLLEQIN.

Polar residues predominate over residues 1–16 (MDSVSNLKSTNFQNNN). Disordered stretches follow at residues 1 to 21 (MDSVSNLKSTNFQNNNDPKES), 37 to 68 (HIKKTKKKLKKQKKRKHGSKMSHEDEDTDMDW), and 100 to 138 (SSMREKDKRSCHKKSSNSRSERKKHRKRKSSKERKAKIK). Residues 37 to 56 (HIKKTKKKLKKQKKRKHGSK) show a composition bias toward basic residues. Thr64 carries the phosphothreonine modification. The segment covering 108 to 137 (RSCHKKSSNSRSERKKHRKRKSSKERKAKI) has biased composition (basic residues). Residues 273–339 (KFTPSEENAL…SIYKHIRRKY (67 aa)) enclose the Myb-like 1 domain. Residues 340–391 (HIFEQRGKWTPEEDQELARLCLEKEGHWTEVGKLLGRMPEDCRDRWRNYMKC) form the HTH myb-type domain. The H-T-H motif DNA-binding region spans 367–389 (WTEVGKLLGRMPEDCRDRWRNYM). Myb-like domains lie at 392-486 (GSKR…NKLV) and 493-549 (SMLS…MREK).

As to quaternary structure, interacts with FOB1. Interacts with the RENT complex subunits NET1 and SIR2.

It localises to the nucleus. The protein resides in the nucleolus. DNA-binding protein that recognizes sequence-specific replication termini (Ter sites) within rDNA. Binds to rDNA terminator elements and mediates efficient RNA polymerase I transcription termination. Required for rDNA silencing at the non-transcribed spacer 1 (NTS1). Promotes the association of SIR2 with NTS1 and contributes to maintenance of rDNA stability. This Saccharomyces cerevisiae (strain ATCC 204508 / S288c) (Baker's yeast) protein is RNA polymerase I termination factor.